The primary structure comprises 599 residues: mRNA export factor MEX67 (599 aa).

N-acetylserine is present on Ser2. LRR repeat units follow at residues 163–184 (IVESVNLADNQLKDISAISTLA) and 189–210 (NLKNLCLANNQIFRFRSLEVWK). The 39-residue stretch at 224 to 262 (NPITTDKLYRTEMLRLFPKLVVLDNVIVRDEQKLQTVYS) folds into the LRRCT domain. The NTF2 domain occupies 280–467 (SSTDFATNFL…VIIASDLLTV (188 aa)). Residues 408-439 (KPELESNKKTGKNNYQKNRRYNHGYNSTSNNK) are disordered. The 54-residue stretch at 546-599 (PVQLELLNKLHLETKLNAEYTFMLAEQSNWNYEVAIKGFQSSMNGIPREAFVQF) folds into the TAP-C domain.

The protein belongs to the NXF family. As to quaternary structure, interacts with nucleoporin complex NUP84 and MTR2. Interacts with MIP6.

It is found in the nucleus. The protein resides in the cytoplasm. In terms of biological role, involved in the export of mRNA from the nucleus to the cytoplasm. In Saccharomyces cerevisiae (strain ATCC 204508 / S288c) (Baker's yeast), this protein is mRNA export factor MEX67 (MEX67).